A 250-amino-acid chain; its full sequence is Coproheme decarboxylase (250 aa).

Fe-coproporphyrin III contacts are provided by residues R131, 145–149 (YPMNK), H172, and Q185. Y145 is a catalytic residue.

This sequence belongs to the ChdC family. Type 1 subfamily. It depends on Fe-coproporphyrin III as a cofactor.

It carries out the reaction Fe-coproporphyrin III + 2 H2O2 + 2 H(+) = heme b + 2 CO2 + 4 H2O. It catalyses the reaction Fe-coproporphyrin III + H2O2 + H(+) = harderoheme III + CO2 + 2 H2O. The enzyme catalyses harderoheme III + H2O2 + H(+) = heme b + CO2 + 2 H2O. It participates in porphyrin-containing compound metabolism; protoheme biosynthesis. Its function is as follows. Involved in coproporphyrin-dependent heme b biosynthesis. Catalyzes the decarboxylation of Fe-coproporphyrin III (coproheme) to heme b (protoheme IX), the last step of the pathway. The reaction occurs in a stepwise manner with a three-propionate intermediate. The sequence is that of Coproheme decarboxylase from Staphylococcus aureus (strain bovine RF122 / ET3-1).